The sequence spans 436 residues: MGQVLPLVTRLGDRIAIVSGLRTPFARQATAFHGIPAVDLGKMVVGELLARSEIPAEVIEQLVFGQVVQMPEAPNIAREIVLGTGMNVHTDAYSVSRACATSFQAIANVAESLMAGTIRAGIAGGADSSSVLPIGVSKKLARVLVDVNKARTMSQRLKLFSRLRLRDLMPVPPAVAEYSTGLRMGDTAEQMAKTYGITREQQDALAHRSHQRAAQAWSDGKLKEEVMTAFIPPYKQPLAEDNNIRGNSTLADYAKLRPAFDRKHGTVTAANSTPLTDGAAAVILMTESRAKELGLVPLGYLRSYAFTAIDVWQDMLLGPAWSTPLALERAGLTMSDLTLIDMHEAFAAQTLANIQLLGSERFARDVLGRAHATGEVDDSKFNVLGGSIAYGHPFAATGARMITQTLHELRRRGGGFGLVTACAAGGLGAAMVVEAE.

The Acyl-thioester intermediate role is filled by Cys99. Active-site proton acceptor residues include His392 and Cys422.

Belongs to the thiolase-like superfamily. Thiolase family. Heterotetramer of two alpha chains (FadJ) and two beta chains (FadI).

It localises to the cytoplasm. The catalysed reaction is an acyl-CoA + acetyl-CoA = a 3-oxoacyl-CoA + CoA. It participates in lipid metabolism; fatty acid beta-oxidation. In terms of biological role, catalyzes the final step of fatty acid oxidation in which acetyl-CoA is released and the CoA ester of a fatty acid two carbons shorter is formed. The sequence is that of 3-ketoacyl-CoA thiolase from Escherichia coli (strain SMS-3-5 / SECEC).